A 337-amino-acid polypeptide reads, in one-letter code: Protein BIG GRAIN 1-like (337 aa).

3 disordered regions span residues Met1–Ser32, Ser120–Ser163, and Lys179–Ser235. A compositionally biased stretch (basic and acidic residues) spans His137–Ala146. Composition is skewed to low complexity over residues Pro150–Ser163 and Pro195–Ala209.

The protein belongs to the BIG GRAIN 1 (BG1) plant protein family.

It localises to the cell membrane. Its function is as follows. Involved in auxin transport. Regulator of the auxin signaling pathway. The chain is Protein BIG GRAIN 1-like from Oryza sativa subsp. japonica (Rice).